The chain runs to 457 residues: Transmembrane protease serine 5 (457 aa).

The tract at residues 1–21 (MSLMLDDQPPMEAQYAEEGPG) is disordered. The Cytoplasmic portion of the chain corresponds to 1–49 (MSLMLDDQPPMEAQYAEEGPGPGIFRAEPGDQQHPISQAVCWRSMRRGC). A helical; Signal-anchor for type II membrane protein membrane pass occupies residues 50-70 (AVLGALGLLAGAGVGSWLLVL). The Extracellular portion of the chain corresponds to 71–457 (YLCPAASQPI…IHDTAQDSLL (387 aa)). The SRCR domain occupies 112–207 (FRINSEDFLL…SGQVVSLRCS (96 aa)). 7 cysteine pairs are disulfide-bonded: Cys-135/Cys-196, Cys-148/Cys-206, Cys-209/Cys-328, Cys-243/Cys-259, Cys-342/Cys-411, Cys-374/Cys-390, and Cys-401/Cys-429. N-linked (GlcNAc...) asparagine glycosylation is found at Asn-163, Asn-170, and Asn-195. Positions 218 to 453 (IVGGQSVAPG…FLDWIHDTAQ (236 aa)) constitute a Peptidase S1 domain. Residues His-258 and Asp-308 each act as charge relay system in the active site. Asn-319 and Asn-375 each carry an N-linked (GlcNAc...) asparagine glycan. The active-site Charge relay system is Ser-405.

The protein belongs to the peptidase S1 family. As to expression, brain-specific. Predominantly expressed in neurons, in their axons, and at the synapses of motoneurons in the spinal cord.

The protein resides in the cell membrane. In terms of biological role, may play a role in hearing. This chain is Transmembrane protease serine 5 (TMPRSS5), found in Homo sapiens (Human).